The sequence spans 170 residues: VIP peptides (170 aa).

Residues 1–20 form the signal peptide; it reads MDTRNKAQLLVLLTLLSVLF. Positions 21-79 are excised as a propeptide; it reads SQTSAWPLYRAPSALRLGDRIPFEGANEPDQVSLKEDIDMLQNALAENDTPYYDVSRNA. Serine 76 carries the phosphoserine modification. Methionine 107 is modified (methionine amide). At asparagine 152 the chain carries Asparagine amide. A propeptide spanning residues 156 to 170 is cleaved from the precursor; that stretch reads SSEGESPDFPEELEK.

Belongs to the glucagon family.

It is found in the secreted. Its function is as follows. VIP is a neuropeptide involved in a diverse array of physiological processes through activating the PACAP subfamily of class B1 G protein-coupled receptors: VIP receptor 1 (VPR1) and VIP receptor 2 (VPR2). Abundantly expressed throughout the CNS and peripheral nervous systems where they primarily exert neuroprotective and immune modulatory roles. Also causes vasodilation, lowers arterial blood pressure, stimulates myocardial contractility, increases glycogenolysis and relaxes the smooth muscle of trachea, stomach and gall bladder. PHM-27 and PHV-42 are two bioactive forms from proteolysis of the same precursor protein, that cause vasodilation. PHM-27 is a potent agonist of the calcitonin receptor CALCR, with similar efficacy as calcitonin. The polypeptide is VIP peptides (Homo sapiens (Human)).